We begin with the raw amino-acid sequence, 636 residues long: Polyglycine hydrolase (636 aa).

The first 22 residues, 1–22 (MHSLSLRRLLTSVLSLCSCSSA), serve as a signal peptide directing secretion. N-linked (GlcNAc...) asparagine glycosylation is found at N30 and N151. C141 and C175 are joined by a disulfide. S363 is a catalytic residue. N383 and N481 each carry an N-linked (GlcNAc...) asparagine glycan. The interval 512-540 (TEDRIVQESKNTGQDPVHPQSAKLVPGPH) is disordered.

The protein belongs to the peptidase S12 family.

Its subcellular location is the secreted. The enzyme catalyses a glycyl-glycyl-[protein] + H2O = N-terminal glycyl-[protein] + [protein]-C-terminal glycine. Serine-type endopeptidase that cleaves Gly-Gly bonds in the polyglycine linker of host plant class IV chitinases to disrupt their chitin-binding, and thereby plays a role in lowering the defense responses of the host to the fungus. Degrades Z.mays Endochitinase A (CHIA) in vitro, although corn is not its host species. The chain is Polyglycine hydrolase from Fusarium vanettenii (strain ATCC MYA-4622 / CBS 123669 / FGSC 9596 / NRRL 45880 / 77-13-4) (Fusarium solani subsp. pisi).